The sequence spans 73 residues: STKNGRDSNSQRLGVKVYGNQPVKAGGIVVRQRGLTFKPGNSMKVGKDYTLFSCKDGIVQFETNGKTKFVHVY.

This sequence belongs to the bacterial ribosomal protein bL27 family.

The protein localises to the plastid. It localises to the chloroplast. The polypeptide is Large ribosomal subunit protein bL27c (rpl27) (Haptolina hirta (Plankton alga)).